The chain runs to 192 residues: Lipid A acyltransferase PagP (192 aa).

The first 24 residues, 1–24, serve as a signal peptide directing secretion; sequence MWLRFCAPALMAWYWVFFPSTSQA. Active-site residues include histidine 63, aspartate 106, and serine 107.

This sequence belongs to the lipid A palmitoyltransferase family. Homodimer.

It is found in the cell outer membrane. The catalysed reaction is a lipid A + a 1,2-diacyl-sn-glycero-3-phosphocholine = a hepta-acyl lipid A + a 2-acyl-sn-glycero-3-phosphocholine. It carries out the reaction a lipid IVA + a 1,2-diacyl-sn-glycero-3-phosphocholine = a lipid IVB + a 2-acyl-sn-glycero-3-phosphocholine. It catalyses the reaction a lipid IIA + a 1,2-diacyl-sn-glycero-3-phosphocholine = a lipid IIB + a 2-acyl-sn-glycero-3-phosphocholine. Functionally, transfers a fatty acid residue from the sn-1 position of a phospholipid to the N-linked hydroxyfatty acid chain on the proximal unit of lipid A or its precursors. The protein is Lipid A acyltransferase PagP of Musicola paradisiaca (strain Ech703) (Dickeya paradisiaca).